The chain runs to 247 residues: Isoprenyl transferase (247 aa).

Residue D18 is part of the active site. Mg(2+) is bound at residue D18. Substrate is bound by residues 19-22 (GNGR), W23, R31, H35, and 63-65 (SSE). Residue N66 is the Proton acceptor of the active site. Substrate-binding positions include W67, R69, R186, and 192–194 (RLS). E205 provides a ligand contact to Mg(2+).

This sequence belongs to the UPP synthase family. As to quaternary structure, homodimer. The cofactor is Mg(2+).

In terms of biological role, catalyzes the condensation of isopentenyl diphosphate (IPP) with allylic pyrophosphates generating different type of terpenoids. This is Isoprenyl transferase from Rhizobium meliloti (strain 1021) (Ensifer meliloti).